The sequence spans 358 residues: Trace amine-associated receptor 7f (358 aa).

Over 1-47 the chain is Extracellular; it reads MSIADETVSWNQDSILSRDLFSATSAELCYENLNRSCVRSPYSPGPR. N34 carries an N-linked (GlcNAc...) asparagine glycan. 2 cysteine pairs are disulfide-bonded: C37–C201 and C120–C205. The helical transmembrane segment at 48-68 threads the bilayer; sequence LILYAVFGFGAVLAVCGNLLV. Over 69–83 the chain is Cytoplasmic; that stretch reads MTSILHFRQLHSPAN. A helical membrane pass occupies residues 84 to 104; sequence FLVASLACADFLVGVMVMPFS. Over 105-121 the chain is Extracellular; it reads MVRSVEGCWYFGDSYCK. A helical transmembrane segment spans residues 122 to 143; it reads LHTCFDVSFCYCSLFHLCFISV. At 144 to 166 the chain is on the cytoplasmic side; sequence DRYIAVSDPLAYPTRFTASVSGK. Residues 167–187 form a helical membrane-spanning segment; sequence CITFSWLLSISYGFSLIYTGA. Residues 188 to 212 lie on the Extracellular side of the membrane; that stretch reads SEAGLEDLVSSLTCVGGCQIAVNQT. A glycan (N-linked (GlcNAc...) asparagine) is linked at N210. The chain crosses the membrane as a helical span at residues 213-233; it reads WVFINFSVFLIPTLVMITVYS. Residues 234 to 274 lie on the Cytoplasmic side of the membrane; that stretch reads KIFLIAKQQAQNIEKMSKQTARASDSYKDRVAKRERKAAKT. A helical transmembrane segment spans residues 275 to 295; that stretch reads LGIAVAAFLLSWLPYFIDSFI. The Extracellular segment spans residues 296 to 309; it reads DAFLGFITPTYVYE. The helical transmembrane segment at 310–333 threads the bilayer; the sequence is ILVWIVYYNSAMNPLIYAFFYPWF. Topologically, residues 334 to 358 are cytoplasmic; the sequence is RKAIKLTVTGKILRENSSTTNLFSE.

This sequence belongs to the G-protein coupled receptor 1 family. Specifically expressed in neurons of the olfactory epithelium.

It localises to the cell membrane. In terms of biological role, olfactory receptor activated by trace amines, such as N-methylpiperidine and N,N-dimethylcyclohexylamine. Trace amine compounds are enriched in animal body fluids and act on trace amine-associated receptors (TAARs) to elicit both intraspecific and interspecific innate behaviors. Ligand-binding causes a conformation change that triggers signaling via G(s)-class of G alpha proteins (GNAL or GNAS). This Mus musculus (Mouse) protein is Trace amine-associated receptor 7f.